The chain runs to 156 residues: Small ribosomal subunit protein uS7 (156 aa).

The protein belongs to the universal ribosomal protein uS7 family. In terms of assembly, part of the 30S ribosomal subunit. Contacts proteins S9 and S11.

In terms of biological role, one of the primary rRNA binding proteins, it binds directly to 16S rRNA where it nucleates assembly of the head domain of the 30S subunit. Is located at the subunit interface close to the decoding center, probably blocks exit of the E-site tRNA. This is Small ribosomal subunit protein uS7 from Bacillus cytotoxicus (strain DSM 22905 / CIP 110041 / 391-98 / NVH 391-98).